The sequence spans 285 residues: Bifunctional protein FolD (285 aa).

Residues 166 to 168 (GAS) and Ile-232 each bind NADP(+).

It belongs to the tetrahydrofolate dehydrogenase/cyclohydrolase family. As to quaternary structure, homodimer.

The enzyme catalyses (6R)-5,10-methylene-5,6,7,8-tetrahydrofolate + NADP(+) = (6R)-5,10-methenyltetrahydrofolate + NADPH. It catalyses the reaction (6R)-5,10-methenyltetrahydrofolate + H2O = (6R)-10-formyltetrahydrofolate + H(+). It functions in the pathway one-carbon metabolism; tetrahydrofolate interconversion. Its activity is regulated as follows. The NAD(+)-dependent dehydrogenase is activated by inorganic phosphate. In terms of biological role, catalyzes the oxidation of 5,10-methylenetetrahydrofolate to 5,10-methenyltetrahydrofolate and then the hydrolysis of 5,10-methenyltetrahydrofolate to 10-formyltetrahydrofolate. This Photobacterium phosphoreum protein is Bifunctional protein FolD.